The primary structure comprises 414 residues: MNTSRLFSLLFQGSLVKRIAAGLVLGIVVALISAPLQETIGFNLAEKVGVLGTIFVKALRAVAPILIFFLVMAALANRKIGTKSNMKEIIVLYLLGTFLAAFVAVIAGFAFPTEVVLAAKEDSSSAPQAVGQVLLTLILNVVDNPLNAIFKANFIGVLAWSIGLGLALRHASDATKNVLSDFAEGVSKIVHVIISFAPFGVFGLVAETLSDKGLVALGGYVQLLAVLIGTMLFTAFVVNPILVYWKIRRNPYPLVWTCVRESGVTAFFTRSSAANIPVNIELAKRLNLDEETYSVSIPLGANINMAGAAITITILTLAAVHTLGLEVSFVSALLLSIVAALCACGASGVAGGSLLLIPLACSLFGISDDVAAQMIGVGFIIGILQDSTETALNSSTDVLFTAAVCMEEERKNAA.

8 helical membrane passes run 22-42 (GLVLGIVVALISAPLQETIGF), 54-74 (IFVKALRAVAPILIFFLVMAA), 89-109 (IIVLYLLGTFLAAFVAVIAGF), 148-168 (AIFKANFIGVLAWSIGLGLAL), 189-209 (IVHVIISFAPFGVFGLVAETL), 223-243 (LLAVLIGTMLFTAFVVNPILV), 305-325 (MAGAAITITILTLAAVHTLGL), and 337-357 (IVAALCACGASGVAGGSLLLI).

Belongs to the dicarboxylate/amino acid:cation symporter (DAACS) (TC 2.A.23) family.

Its subcellular location is the cell inner membrane. It carries out the reaction L-serine(in) + Na(+)(in) = L-serine(out) + Na(+)(out). It catalyses the reaction L-threonine(in) + Na(+)(in) = L-threonine(out) + Na(+)(out). Involved in the import of serine and threonine into the cell, with the concomitant import of sodium (symport system). The chain is Serine/threonine transporter SstT from Haemophilus influenzae (strain PittEE).